Here is a 163-residue protein sequence, read N- to C-terminus: Nucleotide-binding protein CYA_0935 (163 aa).

This sequence belongs to the YajQ family.

Nucleotide-binding protein. The polypeptide is Nucleotide-binding protein CYA_0935 (Synechococcus sp. (strain JA-3-3Ab) (Cyanobacteria bacterium Yellowstone A-Prime)).